Here is a 312-residue protein sequence, read N- to C-terminus: Plasminogen activator (312 aa).

An N-terminal signal peptide occupies residues 1–20; sequence MKKSSIVATIITILSGSANA. Residues 21-31 lie on the Periplasmic side of the membrane; that stretch reads ASSQLIPNISP. Residues 32–40 form a beta stranded membrane-spanning segment; it reads DSFTVAAST. The Extracellular segment spans residues 41–70; the sequence is GMLSGKSHEMLYDAETGRKISQLDWKIKNV. A beta stranded membrane pass occupies residues 71–80; the sequence is AILKGDISWD. Topologically, residues 81–84 are periplasmic; that stretch reads PYSF. The beta stranded transmembrane segment at 85-94 threads the bilayer; it reads LTLNARGWTS. Residues 95–131 lie on the Extracellular side of the membrane; that stretch reads LASGSGNMDDYDWMNENQSEWTDHSSHPATNVNHANE. Active-site residues include D104 and D106. The beta stranded transmembrane segment at 132–140 threads the bilayer; that stretch reads YDLNVKGWL. Residues 141–145 lie on the Periplasmic side of the membrane; the sequence is LQDEN. Residues 146–154 form a beta stranded membrane-spanning segment; the sequence is YKAGITAGY. At 155–194 the chain is on the extracellular side; sequence QETRFSWTATGGSYSYNNGAYTGNFPKGVRVIGYNQRFSM. A beta stranded transmembrane segment spans residues 195–204; that stretch reads PYIGLAGQYR. Residues 205-207 are Periplasmic-facing; that stretch reads IND. The chain crosses the membrane as a beta stranded span at residues 208–216; sequence FELNALFKF. Over 217–244 the chain is Extracellular; it reads SDWVRAHDNDEHYMRDLTFREKTSGSRY. Catalysis depends on residues D226 and H228. The beta stranded transmembrane segment at 245-255 threads the bilayer; the sequence is YGTVINAGYYV. Topologically, residues 256-258 are periplasmic; that stretch reads TPN. A beta stranded membrane pass occupies residues 259–267; sequence AKVFAEFTY. Residues 268–301 lie on the Extracellular side of the membrane; sequence SKYDEGKGGTQTIDKNSGDSVSIGGDAAGISNKN. A beta stranded membrane pass occupies residues 302 to 312; sequence YTVTAGLQYRF.

Belongs to the peptidase A26 family.

The protein resides in the cell outer membrane. It carries out the reaction Converts human Glu-plasminogen to plasmin by cleaving the 560-Arg-|-Val-561 peptide bond that is also hydrolyzed by the mammalian u-plasminogen activator and t-plasminogen activator. Also cleaves arginyl bonds in other proteins.. Its activity is regulated as follows. Requires bacterial lipopolysaccharide (LPS) for activation; addition of LPS to inactive protein reactivates it. In the absence of LPS the active site groove is slightly narrower, and peptide substrate binds deep within the active site groove, displacing the nucleophilic water molecule. Its function is as follows. In the mammalian host activates (cleaves) plasminogen to generate the serine protease plasmin. Plasmin degrades fibrin clots (fibrinolysis) and facilitates bacterial cell migration, enabling rapid dissemination of bacteria from the initial site of infection. Cleaves host plasminogen to generate plasmin and probably also has autocatalytic activity. Fibrinolytic activity prevails at 37 degrees Celsius whereas coagulase expression predominates at lower temperatures (28 degrees Celsius). Cleaves plasminogen; plasminogen cleavage is much higher than coagulase activity. This Yersinia pestis protein is Plasminogen activator.